The following is a 626-amino-acid chain: 4-hydroxy-3-methylbut-2-en-1-yl diphosphate synthase (flavodoxin) (626 aa).

[4Fe-4S] cluster contacts are provided by C521, C524, C555, and E562.

Belongs to the IspG family. [4Fe-4S] cluster is required as a cofactor.

The enzyme catalyses (2E)-4-hydroxy-3-methylbut-2-enyl diphosphate + oxidized [flavodoxin] + H2O + 2 H(+) = 2-C-methyl-D-erythritol 2,4-cyclic diphosphate + reduced [flavodoxin]. Its pathway is isoprenoid biosynthesis; isopentenyl diphosphate biosynthesis via DXP pathway; isopentenyl diphosphate from 1-deoxy-D-xylulose 5-phosphate: step 5/6. Converts 2C-methyl-D-erythritol 2,4-cyclodiphosphate (ME-2,4cPP) into 1-hydroxy-2-methyl-2-(E)-butenyl 4-diphosphate. The chain is 4-hydroxy-3-methylbut-2-en-1-yl diphosphate synthase (flavodoxin) from Bacteroides fragilis (strain YCH46).